The following is an 818-amino-acid chain: Sorting nexin-29 (818 aa).

The RUN domain occupies 36–180 (SDSDSRVTCL…ILFAINIDNK (145 aa)). The disordered stretch occupies residues 267–299 (VSFDDDEEEQGTGDTLKKMPGTAESSEENSDRS). Serine 268, serine 291, serine 292, serine 330, serine 344, serine 447, and serine 452 each carry phosphoserine. 2 disordered regions span residues 343-375 (KSIDDDVDENEEDAYRSPLGRGHTGHAESPDRT) and 441-462 (RYREASSPGQGSPLSSLLPSAS). A compositionally biased stretch (low complexity) spans 445–462 (ASSPGQGSPLSSLLPSAS). A coiled-coil region spans residues 467–547 (MTVHELRQAI…VLKVQLKKYV (81 aa)). Serine 642 carries the post-translational modification Phosphoserine. Position 644 is a phosphothreonine (threonine 644). Phosphoserine occurs at positions 645 and 649. The region spanning 659–782 (ALINVWIPSV…PFFVDITPPG (124 aa)) is the PX domain. Residues 781-818 (PGEPLNKSSRPKAVSRFPKLSRGHPREVRNVEPQSGDL) are disordered.

Belongs to the sorting nexin family.

The sequence is that of Sorting nexin-29 (Snx29) from Mus musculus (Mouse).